The chain runs to 502 residues: MRKAAALASAAMAAAAVAVVSTVLHQRQRRAAKRSERAEAVLLRDLQERCAAPVELLRQVADAMAAEMRAGLAAEGGSDLQMLVTYVDSLPSGGEKGMFYALDLGGTNFRVLRVQLGGKERRIIKQDSEGISIPQHLMSSSSHELFDFVAVALAKFVASEGEDCHLPEGTQRELGFTFSFPVKQKSLASGTLIKWTKSFAIDEMVGKDVVAELNMAIRSQGLDMKVTALVNDTVGTLAAGRYVNHDTIAAVILGTGSNAAYIDHADAIPKWHGSLPKSGNMVINMEWGNFKSSHLPLTEFDQELDAESLNPGKQVYEKSISGMYMGELVRRILLKMAQETRIFGDNIPPKLERPYILRTLDMLIMHHDTSSDLRTVANKLKEVLGIEYTSFTTRKLVLDVCEAIATRGARLAAAGIYGIIQKLGQHSDSPSTRRSVIAVDGGVYKYYTFFSQCMESTLSDMLGQELAPSVMIKHVNDGSGVGAALLAASYSQYHQAESADSS.

The chain crosses the membrane as a helical span at residues 5-24 (AALASAAMAAAAVAVVSTVL). The region spanning 37-488 (RAEAVLLRDL…SGVGAALLAA (452 aa)) is the Hexokinase domain. The interval 92–230 (SGGEKGMFYA…GLDMKVTALV (139 aa)) is hexokinase small subdomain. ADP-binding residues include G106, T107, and N108. The D-glucose site is built by T196, K197, N231, and D232. The interval 231-477 (NDTVGTLAAG…PSVMIKHVND (247 aa)) is hexokinase large subdomain. T255 serves as a coordination point for ADP. D-glucose contacts are provided by N258, E286, and E317. G442 is an ADP binding site.

Belongs to the hexokinase family. Expressed in roots, leaves, flowers, immature seeds, endosperm and seed coat.

The protein resides in the plastid. It localises to the chloroplast outer membrane. It carries out the reaction a D-hexose + ATP = a D-hexose 6-phosphate + ADP + H(+). The enzyme catalyses D-fructose + ATP = D-fructose 6-phosphate + ADP + H(+). The catalysed reaction is D-glucose + ATP = D-glucose 6-phosphate + ADP + H(+). It participates in carbohydrate metabolism; hexose metabolism. Its pathway is carbohydrate degradation; glycolysis; D-glyceraldehyde 3-phosphate and glycerone phosphate from D-glucose: step 1/4. Its function is as follows. Fructose and glucose phosphorylating enzyme. This chain is Hexokinase-9 (HXK9), found in Oryza sativa subsp. japonica (Rice).